The chain runs to 342 residues: NADH-quinone oxidoreductase subunit H (342 aa).

Transmembrane regions (helical) follow at residues 15-35 (LLIITALQALAILVPLMLMVA), 86-106 (VLFILAPLLTFILAMIAWAVV), 119-139 (VGVLYLFAISSLGVYGVIIAG), 159-179 (VSYEVSIGFVMVAILLCVGSL), 190-210 (HVWFVLPMLPMAVIFFISGLA), 251-271 (FMICAMTTLLFLGGWLPPFDI), 277-297 (VPGPIWFVLKVCALMFVFFWV), and 316-336 (VFLPFSLVWLLLTACVLELAG).

It belongs to the complex I subunit 1 family. NDH-1 is composed of 14 different subunits. Subunits NuoA, H, J, K, L, M, N constitute the membrane sector of the complex.

Its subcellular location is the cell inner membrane. It carries out the reaction a quinone + NADH + 5 H(+)(in) = a quinol + NAD(+) + 4 H(+)(out). In terms of biological role, NDH-1 shuttles electrons from NADH, via FMN and iron-sulfur (Fe-S) centers, to quinones in the respiratory chain. The immediate electron acceptor for the enzyme in this species is believed to be ubiquinone. Couples the redox reaction to proton translocation (for every two electrons transferred, four hydrogen ions are translocated across the cytoplasmic membrane), and thus conserves the redox energy in a proton gradient. This subunit may bind ubiquinone. The chain is NADH-quinone oxidoreductase subunit H from Granulibacter bethesdensis (strain ATCC BAA-1260 / CGDNIH1).